The sequence spans 239 residues: uncharacterized protein (239 aa).

The tract at residues 104 to 127 is disordered; sequence LPATSQSSQPKSTNSSTESSSIGQ. Low complexity predominate over residues 107-127; that stretch reads TSQSSQPKSTNSSTESSSIGQ. A coiled-coil region spans residues 134-202; it reads ENEINLNKNK…HFIQNNQESF (69 aa). Residues 211–231 traverse the membrane as a helical segment; that stretch reads VKIGSAFIIYIFYNVLFFIIV.

The protein resides in the membrane. This is an uncharacterized protein from Dictyostelium discoideum (Social amoeba).